Here is a 68-residue protein sequence, read N- to C-terminus: Medusin-DA1 (68 aa).

A signal peptide spans 1-22 (MAFLKKSLFLVLFLGLVSLSVC). Residues 23-48 (EEEKRENEEEKNEQEEDDREERNEEK) constitute a propeptide that is removed on maturation. The tract at residues 25–47 (EKRENEEEKNEQEEDDREERNEE) is disordered. Residues 31–41 (EEKNEQEEDDR) show a composition bias toward acidic residues. Leucine amide is present on Leu-67.

The protein belongs to the frog skin active peptide (FSAP) family. Medusin subfamily. In terms of tissue distribution, expressed by the skin glands.

It is found in the secreted. Functionally, antimicrobial peptide with activity against Gram-positive bacteria (S.aureus, MIC=32 mg/L) and fungi (C.albicans, MIC=64 mg/L). Shows weak hemolytic activity. The protein is Medusin-DA1 of Agalychnis dacnicolor (Giant Mexican leaf frog).